Reading from the N-terminus, the 394-residue chain is Elongation factor Tu (394 aa).

The region spanning 10–204 (KPHVNVGTIG…HLDTYIPEPE (195 aa)) is the tr-type G domain. The tract at residues 19 to 26 (GHVDHGKT) is G1. 19–26 (GHVDHGKT) serves as a coordination point for GTP. Mg(2+) is bound at residue Thr-26. Positions 60 to 64 (GITIN) are G2. Positions 81–84 (DCPG) are G3. GTP contacts are provided by residues 81–85 (DCPGH) and 136–139 (NKCD). The tract at residues 136–139 (NKCD) is G4. A G5 region spans residues 174-176 (SAL).

This sequence belongs to the TRAFAC class translation factor GTPase superfamily. Classic translation factor GTPase family. EF-Tu/EF-1A subfamily. In terms of assembly, monomer.

It localises to the cytoplasm. It catalyses the reaction GTP + H2O = GDP + phosphate + H(+). In terms of biological role, GTP hydrolase that promotes the GTP-dependent binding of aminoacyl-tRNA to the A-site of ribosomes during protein biosynthesis. The chain is Elongation factor Tu from Aeromonas hydrophila subsp. hydrophila (strain ATCC 7966 / DSM 30187 / BCRC 13018 / CCUG 14551 / JCM 1027 / KCTC 2358 / NCIMB 9240 / NCTC 8049).